The chain runs to 226 residues: Large ribosomal subunit protein uL1 (226 aa).

Belongs to the universal ribosomal protein uL1 family. In terms of assembly, part of the 50S ribosomal subunit.

In terms of biological role, binds directly to 23S rRNA. The L1 stalk is quite mobile in the ribosome, and is involved in E site tRNA release. Protein L1 is also a translational repressor protein, it controls the translation of the L11 operon by binding to its mRNA. This is Large ribosomal subunit protein uL1 from Mycoplasma genitalium (strain ATCC 33530 / DSM 19775 / NCTC 10195 / G37) (Mycoplasmoides genitalium).